We begin with the raw amino-acid sequence, 456 residues long: GTPase Der (456 aa).

2 EngA-type G domains span residues 4–169 (PIVA…PSKE) and 178–353 (IQLA…EQHR). Residues 10–17 (GRPNVGKS), 57–61 (DTGGL), 120–123 (NKCE), 184–191 (GRPNVGKS), 231–235 (DTAGI), and 296–299 (NKWD) each bind GTP. A KH-like domain is found at 354–439 (RRVSTSVVNE…PLKLFWRGKQ (86 aa)).

The protein belongs to the TRAFAC class TrmE-Era-EngA-EngB-Septin-like GTPase superfamily. EngA (Der) GTPase family. As to quaternary structure, associates with the 50S ribosomal subunit.

GTPase that plays an essential role in the late steps of ribosome biogenesis. The chain is GTPase Der from Prochlorococcus marinus (strain MIT 9211).